The chain runs to 321 residues: Lipoyl synthase (321 aa).

[4Fe-4S] cluster is bound by residues cysteine 68, cysteine 73, cysteine 79, cysteine 94, cysteine 98, cysteine 101, and serine 308. One can recognise a Radical SAM core domain in the interval 80–297 (FNHGTATFMI…KAIALDLGFT (218 aa)).

This sequence belongs to the radical SAM superfamily. Lipoyl synthase family. Requires [4Fe-4S] cluster as cofactor.

Its subcellular location is the cytoplasm. The catalysed reaction is [[Fe-S] cluster scaffold protein carrying a second [4Fe-4S](2+) cluster] + N(6)-octanoyl-L-lysyl-[protein] + 2 oxidized [2Fe-2S]-[ferredoxin] + 2 S-adenosyl-L-methionine + 4 H(+) = [[Fe-S] cluster scaffold protein] + N(6)-[(R)-dihydrolipoyl]-L-lysyl-[protein] + 4 Fe(3+) + 2 hydrogen sulfide + 2 5'-deoxyadenosine + 2 L-methionine + 2 reduced [2Fe-2S]-[ferredoxin]. The protein operates within protein modification; protein lipoylation via endogenous pathway; protein N(6)-(lipoyl)lysine from octanoyl-[acyl-carrier-protein]: step 2/2. Its function is as follows. Catalyzes the radical-mediated insertion of two sulfur atoms into the C-6 and C-8 positions of the octanoyl moiety bound to the lipoyl domains of lipoate-dependent enzymes, thereby converting the octanoylated domains into lipoylated derivatives. The sequence is that of Lipoyl synthase from Tolumonas auensis (strain DSM 9187 / NBRC 110442 / TA 4).